Reading from the N-terminus, the 509-residue chain is Acetyl-coenzyme A carboxylase carboxyl transferase subunit beta, chloroplastic (509 aa).

The interval 164–216 is disordered; sequence HGSVCDGESHNSSEGESSSRRTHTKGVDLTIRESSNENERESSNENERKSSND. 2 stretches are compositionally biased toward basic and acidic residues: residues 170–182 and 193–216; these read GESH…ESSS and TIRE…SSND. The CoA carboxyltransferase N-terminal domain occupies 226–509; that stretch reads LWLQCENCYG…LNQNSNQVEC (284 aa). The Zn(2+) site is built by C230, C233, C249, and C252. Residues 230-252 form a C4-type zinc finger; the sequence is CENCYGLNYKKFLKSKMNICEQC. Residues 288-307 are disordered; that stretch reads FDSEGEQEQEQEQEQEEEET.

This sequence belongs to the AccD/PCCB family. Acetyl-CoA carboxylase is a heterohexamer composed of biotin carboxyl carrier protein, biotin carboxylase and 2 subunits each of ACCase subunit alpha and ACCase plastid-coded subunit beta (accD). The cofactor is Zn(2+).

The protein localises to the plastid. Its subcellular location is the chloroplast stroma. The enzyme catalyses N(6)-carboxybiotinyl-L-lysyl-[protein] + acetyl-CoA = N(6)-biotinyl-L-lysyl-[protein] + malonyl-CoA. Its pathway is lipid metabolism; malonyl-CoA biosynthesis; malonyl-CoA from acetyl-CoA: step 1/1. In terms of biological role, component of the acetyl coenzyme A carboxylase (ACC) complex. Biotin carboxylase (BC) catalyzes the carboxylation of biotin on its carrier protein (BCCP) and then the CO(2) group is transferred by the transcarboxylase to acetyl-CoA to form malonyl-CoA. This Ipomoea purpurea (Common morning glory) protein is Acetyl-coenzyme A carboxylase carboxyl transferase subunit beta, chloroplastic.